Reading from the N-terminus, the 281-residue chain is MDRGQDAVIVNADSAQVYADLRVLSARPSDEEMRGVPHVLFGAWDGARACSAADWAAAARREIAAAHQRGALPILVGGTGLYIRTLLDGIAPVPEIDPQVREEVRAMPLEAAYAELEKSDPERARKLAPADAQRITRALEVMRSTGRPLAYWQQQLSGGIGNDVALAPLILLPERQWLYRRCDLRFELMWDGGALEEVEALLARDLPDSLPVMRAIGVPEIAAFLRGDLSRDAAIASGQQATRNYAKRQYTWLRHQNPGDWPRMEYDNSIDSAKIASLLRL.

Interaction with substrate tRNA regions lie at residues 13-16 and 133-137; these read DSAQ and QRITR.

This sequence belongs to the IPP transferase family. In terms of assembly, monomer. Mg(2+) serves as cofactor.

The catalysed reaction is adenosine(37) in tRNA + dimethylallyl diphosphate = N(6)-dimethylallyladenosine(37) in tRNA + diphosphate. Catalyzes the transfer of a dimethylallyl group onto the adenine at position 37 in tRNAs that read codons beginning with uridine, leading to the formation of N6-(dimethylallyl)adenosine (i(6)A). This is tRNA dimethylallyltransferase from Novosphingobium aromaticivorans (strain ATCC 700278 / DSM 12444 / CCUG 56034 / CIP 105152 / NBRC 16084 / F199).